A 124-amino-acid chain; its full sequence is Small ribosomal subunit protein uS12 (124 aa).

At Asp89 the chain carries 3-methylthioaspartic acid.

This sequence belongs to the universal ribosomal protein uS12 family. In terms of assembly, part of the 30S ribosomal subunit. Contacts proteins S8 and S17. May interact with IF1 in the 30S initiation complex.

In terms of biological role, with S4 and S5 plays an important role in translational accuracy. Functionally, interacts with and stabilizes bases of the 16S rRNA that are involved in tRNA selection in the A site and with the mRNA backbone. Located at the interface of the 30S and 50S subunits, it traverses the body of the 30S subunit contacting proteins on the other side and probably holding the rRNA structure together. The combined cluster of proteins S8, S12 and S17 appears to hold together the shoulder and platform of the 30S subunit. This Shewanella oneidensis (strain ATCC 700550 / JCM 31522 / CIP 106686 / LMG 19005 / NCIMB 14063 / MR-1) protein is Small ribosomal subunit protein uS12.